The chain runs to 401 residues: E3 ubiquitin-protein ligase RGLG4 (401 aa).

The disordered stretch occupies residues 1-43 (MTMGNFLKRFGSGKSRSSRNMTLGTTSSQSHEPSPSDPSLSLA). Low complexity predominate over residues 8–19 (KRFGSGKSRSSR). Positions 20–32 (NMTLGTTSSQSHE) are enriched in polar residues. The 221-residue stretch at 79–299 (NLILGVDFTK…KETAFALAAL (221 aa)) folds into the VWFA domain. Positions 326–350 (VPRPPPIPYTPPTNAELPSTASPAS) are disordered. The segment covering 327-336 (PRPPPIPYTP) has biased composition (pro residues). Over residues 341 to 350 (ELPSTASPAS) the composition is skewed to polar residues. An RING-type zinc finger spans residues 357–390 (CPICLTNRKDVAFSCGHMTCGDCGSKISNCPICR).

Interacts with UBC30, GRXS17 and GLB3. Widely expressed.

Its subcellular location is the cytoplasm. The protein resides in the nucleus. The catalysed reaction is S-ubiquitinyl-[E2 ubiquitin-conjugating enzyme]-L-cysteine + [acceptor protein]-L-lysine = [E2 ubiquitin-conjugating enzyme]-L-cysteine + N(6)-ubiquitinyl-[acceptor protein]-L-lysine.. In terms of biological role, possesses E3 ubiquitin-protein ligase in vitro. Acts as upstream modulator of jasmonate (JA) signaling in response to various stimuli, such as JA-inhibited root growth, JA-inductive gene expression, coronatine-mediated pathogen susceptibility, wound-stimulated expression of JA-responsive genes and wound-induced JA biosynthesis. Controls fumonisin B1 (FB1)-triggered programmed cell death (PCD) by modulating the JA signaling pathway. May mediate salicylic acid (SA) suppression of JA signaling in FB1-induced responses. May mediate the formation of 'Lys-48'-linked multiubiquitin chains. Mediates the polyubiquitination and subsequent proteasomal degradation of the target protein GRXS17. The polypeptide is E3 ubiquitin-protein ligase RGLG4 (Arabidopsis thaliana (Mouse-ear cress)).